We begin with the raw amino-acid sequence, 231 residues long: Inner membrane protein YohK (231 aa).

Residue Met-1 is a topological domain, periplasmic. Residues 2–22 (MANIWWSLPLTLIVFFAARKL) form a helical membrane-spanning segment. The Cytoplasmic portion of the chain corresponds to 23–29 (AARYKFP). A helical membrane pass occupies residues 30–50 (LLNPLLVAMVVIIPFLMLTGI). Residues 51–90 (SYDSYFKGSEVLNDLLQPAVVALAYPLYEQLHQIRARWKS) lie on the Periplasmic side of the membrane. Residues 91 to 111 (IITICFIGSVVAMVTGTSVAL) form a helical membrane-spanning segment. Residues 112–118 (LMGASPE) are Cytoplasmic-facing. 2 helical membrane-spanning segments follow: residues 119–139 (IAASILPKSVTTPIAMAVGGS) and 140–160 (IGGIPAISAVCVIFVGILGAV). The Cytoplasmic portion of the chain corresponds to 161–208 (FGHTLLNAMRIRTKAARGLAMGTASHALGTARCAELDYQEGAFSSLAL). The helical transmembrane segment at 209 to 229 (VLCGIITSLIAPFLFPIILAV) threads the bilayer. Over 230–231 (MG) the chain is Periplasmic.

It belongs to the YohK (E.coli)/YwbG (IPA-22R) (B.subtilis) family.

Its subcellular location is the cell inner membrane. This Escherichia coli (strain K12) protein is Inner membrane protein YohK (yohK).